A 611-amino-acid polypeptide reads, in one-letter code: Rho-related BTB domain-containing protein 3 (611 aa).

Residues 1–175 (MSIHIVALGN…KELGATYLEL (175 aa)) are rho-like. BTB domains are found at residues 254 to 356 (VDVV…QWEE) and 420 to 487 (ADVV…CPAG). Residues 420 to 611 (ADVVFEIQGT…HSRKCRCLVM (192 aa)) form an interaction with Rab9 region.

In terms of assembly, interacts with RAB9A and RAB9B (at lower level compared to RAB9A-binding). Interacts with M6PRBP1/TIP47. As to expression, ubiquitous. Highly expressed in neural and cardiac tissues, pancreas, placenta and testis.

Its subcellular location is the golgi apparatus. Functionally, rab9-regulated ATPase required for endosome to Golgi transport. Involved in transport vesicle docking at the Golgi complex, possibly by participating in release M6PRBP1/TIP47 from vesicles to permit their efficient docking and fusion at the Golgi. Specifically binds Rab9, but not other Rab proteins. Has low intrinsic ATPase activity due to autoinhibition, which is relieved by Rab9. The protein is Rho-related BTB domain-containing protein 3 (RHOBTB3) of Homo sapiens (Human).